The sequence spans 171 residues: Cytochrome c oxidase subunit 4 isoform 2, mitochondrial (171 aa).

Residues 1-28 (MLPRAAWSLVLRKGGGGRRGMHSSEGTT) constitute a mitochondrion transit peptide. The segment at 13–32 (KGGGGRRGMHSSEGTTRGGG) is disordered. Over 29–100 (RGGGKMSPYT…TFAEMNRRSN (72 aa)) the chain is Mitochondrial matrix. Residues 101-126 (EWKTVMGCVFFFIGFAALVIWWQRVY) form a helical membrane-spanning segment. The Mitochondrial intermembrane portion of the chain corresponds to 127-171 (VFPPKPITLTDERKAQQLQRMLDMKVNPVQGLASRWDYEKKQWKK).

Belongs to the cytochrome c oxidase IV family. Component of the cytochrome c oxidase (complex IV, CIV), a multisubunit enzyme composed of 14 subunits. The complex is composed of a catalytic core of 3 subunits MT-CO1, MT-CO2 and MT-CO3, encoded in the mitochondrial DNA, and 11 supernumerary subunits COX4I1 (or COX4I2), COX5A, COX5B, COX6A1 (or COX6A2), COX6B1 (or COX6B2), COX6C, COX7A2 (or COX7A1), COX7B, COX7C, COX8A and NDUFA4, which are encoded in the nuclear genome. The complex exists as a monomer or a dimer and forms supercomplexes (SCs) in the inner mitochondrial membrane with NADH-ubiquinone oxidoreductase (complex I, CI) and ubiquinol-cytochrome c oxidoreductase (cytochrome b-c1 complex, complex III, CIII), resulting in different assemblies (supercomplex SCI(1)III(2)IV(1) and megacomplex MCI(2)III(2)IV(2)). Highly expressed in lung.

The protein resides in the mitochondrion inner membrane. It participates in energy metabolism; oxidative phosphorylation. Its function is as follows. Component of the cytochrome c oxidase, the last enzyme in the mitochondrial electron transport chain which drives oxidative phosphorylation. The respiratory chain contains 3 multisubunit complexes succinate dehydrogenase (complex II, CII), ubiquinol-cytochrome c oxidoreductase (cytochrome b-c1 complex, complex III, CIII) and cytochrome c oxidase (complex IV, CIV), that cooperate to transfer electrons derived from NADH and succinate to molecular oxygen, creating an electrochemical gradient over the inner membrane that drives transmembrane transport and the ATP synthase. Cytochrome c oxidase is the component of the respiratory chain that catalyzes the reduction of oxygen to water. Electrons originating from reduced cytochrome c in the intermembrane space (IMS) are transferred via the dinuclear copper A center (CU(A)) of subunit 2 and heme A of subunit 1 to the active site in subunit 1, a binuclear center (BNC) formed by heme A3 and copper B (CU(B)). The BNC reduces molecular oxygen to 2 water molecules using 4 electrons from cytochrome c in the IMS and 4 protons from the mitochondrial matrix. In Homo sapiens (Human), this protein is Cytochrome c oxidase subunit 4 isoform 2, mitochondrial.